The following is a 1439-amino-acid chain: Gag-Pol polyprotein (1439 aa).

G2 is lipidated: N-myristoyl glycine; by host. The segment at 7–31 (ILRGEKLDAWEKIKLRPGGKKHYML) is interaction with Gp41. Positions 8–43 (LRGEKLDAWEKIKLRPGGKKHYMLKHLVWANRELEK) are interaction with host CALM1. The tract at residues 12-19 (KLDAWEKI) is interaction with host AP3D1. Residues 14-33 (DAWEKIKLRPGGKKHYMLKH) form an interaction with membrane phosphatidylinositol 4,5-bisphosphate and RNA region. Residues 16–22 (WEKIKLR) carry the Nuclear export signal motif. The Nuclear localization signal signature appears at 26-32 (KKHYMLK). An interaction with membrane phosphatidylinositol 4,5-bisphosphate region spans residues 73-77 (EELKS). A disordered region spans residues 105 to 128 (EEEQNESQQKTQQAGAADRGKDSQ). Residue Y130 is modified to Phosphotyrosine; by host. The segment at 187-225 (NTVGGHQAAMQMLKDTINEEAAEWDRLHPVHAGPVAPGQ) is interaction with human PPIA/CYPA and NUP153. Residues 275–361 (YSPVSILDIK…GGPAHKARVL (87 aa)) are dimerization/Multimerization of capsid protein p24. CCHC-type zinc fingers lie at residues 387–404 (IKCFNCGKEGHLARNCRA) and 408–425 (KGCWKCGKEGHQMKDCTE). The disordered stretch occupies residues 441-485 (KAREFPSEQTRANSPTRESQTRANSPTTRELQVRGSNTFSEAGAE). The span at 447–480 (SEQTRANSPTRESQTRANSPTTRELQVRGSNTFS) shows a compositional bias: polar residues. The segment at 493 to 497 (PQITL) is dimerization of protease. Residues 512–581 (KEALLDTGAD…TPVNIIGRNM (70 aa)) enclose the Peptidase A2 domain. Catalysis depends on D517, which acts as the For protease activity; shared with dimeric partner. Dimerization of protease stretches follow at residues 541–547 (GIGGFIK) and 580–592 (NMLTQLGRTLNFP). The Reverse transcriptase domain occupies 635 to 825 (EGKISRIGPE…PPFLWMGYEL (191 aa)). Mg(2+)-binding residues include D701, D776, and D777. The segment at 818–826 (FLWMGYELH) is RT 'primer grip'. Residues 989–1005 (WEAWWTDYWQATWIPEW) carry the Tryptophan repeat motif motif. One can recognise an RNase H type-1 domain in the interval 1025–1148 (IAGVETFYVD…VDKLVSSGIR (124 aa)). Mg(2+) is bound by residues D1034, E1069, D1089, and D1140. The Integrase-type zinc-finger motif lies at 1154–1195 (DGIDKAQEEHEKYHSNWRAMANEFNIPPVVPKEIVACCDKCQ). Residues H1163, H1167, C1191, and C1194 each contribute to the Zn(2+) site. Residues 1205 to 1355 (VNCSPGIWQL…SAGERIIDII (151 aa)) form the Integrase catalytic domain. Residues D1215, D1267, and E1303 each coordinate Mg(2+). The integrase-type DNA-binding region spans 1374-1421 (FRVYYRDSRDPIWKGPAKLLWKGEGAVVIQDNSDIKVVPRRKAKIIRD).

In terms of assembly, homotrimer; further assembles as hexamers of trimers. Interacts with gp41 (via C-terminus). Interacts with host CALM1; this interaction induces a conformational change in the Matrix protein, triggering exposure of the myristate group. Interacts with host AP3D1; this interaction allows the polyprotein trafficking to multivesicular bodies during virus assembly. Part of the pre-integration complex (PIC) which is composed of viral genome, matrix protein, Vpr and integrase. As to quaternary structure, homodimer; the homodimer further multimerizes as homohexamers or homopentamers. Interacts with human PPIA/CYPA; This interaction stabilizes the capsid. Interacts with human NUP153. Interacts with host PDZD8; this interaction stabilizes the capsid. Interacts with monkey TRIM5; this interaction destabilizes the capsid. Homodimer, whose active site consists of two apposed aspartic acid residues. In terms of assembly, heterodimer of p66 RT and p51 RT (RT p66/p51). Heterodimerization of RT is essential for DNA polymerase activity. The overall folding of the subdomains is similar in p66 RT and p51 RT but the spatial arrangements of the subdomains are dramatically different. As to quaternary structure, homotetramer; may further associate as a homohexadecamer. Part of the pre-integration complex (PIC) which is composed of viral genome, matrix protein, Vpr and integrase. Interacts with human SMARCB1/INI1 and human PSIP1/LEDGF isoform 1. Interacts with human KPNA3; this interaction might play a role in nuclear import of the pre-integration complex. Interacts with human NUP153; this interaction might play a role in nuclear import of the pre-integration complex. Mg(2+) serves as cofactor. Post-translationally, specific enzymatic cleavages by the viral protease yield mature proteins. The protease is released by autocatalytic cleavage. The polyprotein is cleaved during and after budding, this process is termed maturation. Proteolytic cleavage of p66 RT removes the RNase H domain to yield the p51 RT subunit. Nucleocapsid protein p7 might be further cleaved after virus entry. Tyrosine phosphorylated presumably in the virion by a host kinase. Phosphorylation is apparently not a major regulator of membrane association. In terms of processing, phosphorylated possibly by host MAPK1; this phosphorylation is necessary for Pin1-mediated virion uncoating. Post-translationally, methylated by host PRMT6, impairing its function by reducing RNA annealing and the initiation of reverse transcription.

The protein resides in the host cell membrane. It is found in the host endosome. It localises to the host multivesicular body. The protein localises to the virion membrane. Its subcellular location is the host nucleus. The protein resides in the host cytoplasm. It is found in the virion. It catalyses the reaction Specific for a P1 residue that is hydrophobic, and P1' variable, but often Pro.. The catalysed reaction is Endohydrolysis of RNA in RNA/DNA hybrids. Three different cleavage modes: 1. sequence-specific internal cleavage of RNA. Human immunodeficiency virus type 1 and Moloney murine leukemia virus enzymes prefer to cleave the RNA strand one nucleotide away from the RNA-DNA junction. 2. RNA 5'-end directed cleavage 13-19 nucleotides from the RNA end. 3. DNA 3'-end directed cleavage 15-20 nucleotides away from the primer terminus.. The enzyme catalyses 3'-end directed exonucleolytic cleavage of viral RNA-DNA hybrid.. It carries out the reaction DNA(n) + a 2'-deoxyribonucleoside 5'-triphosphate = DNA(n+1) + diphosphate. Its activity is regulated as follows. Protease: The viral protease is inhibited by many synthetic protease inhibitors (PIs), such as amprenavir, atazanavir, indinavir, loprinavir, nelfinavir, ritonavir and saquinavir. Use of protease inhibitors in tritherapy regimens permit more ambitious therapeutic strategies. Reverse transcriptase/ribonuclease H: RT can be inhibited either by nucleoside RT inhibitors (NRTIs) or by non nucleoside RT inhibitors (NNRTIs). NRTIs act as chain terminators, whereas NNRTIs inhibit DNA polymerization by binding a small hydrophobic pocket near the RT active site and inducing an allosteric change in this region. Classical NRTIs are abacavir, adefovir (PMEA), didanosine (ddI), lamivudine (3TC), stavudine (d4T), tenofovir (PMPA), zalcitabine (ddC), and zidovudine (AZT). Classical NNRTIs are atevirdine (BHAP U-87201E), delavirdine, efavirenz (DMP-266), emivirine (I-EBU), and nevirapine (BI-RG-587). The tritherapies used as a basic effective treatment of AIDS associate two NRTIs and one NNRTI. Its function is as follows. Mediates, with Gag polyprotein, the essential events in virion assembly, including binding the plasma membrane, making the protein-protein interactions necessary to create spherical particles, recruiting the viral Env proteins, and packaging the genomic RNA via direct interactions with the RNA packaging sequence (Psi). Gag-Pol polyprotein may regulate its own translation, by the binding genomic RNA in the 5'-UTR. At low concentration, the polyprotein would promote translation, whereas at high concentration, the polyprotein would encapsidate genomic RNA and then shut off translation. Targets the polyprotein to the plasma membrane via a multipartite membrane-binding signal, that includes its myristoylated N-terminus. Matrix protein is part of the pre-integration complex. Implicated in the release from host cell mediated by Vpu. Binds to RNA. Functionally, forms the conical core that encapsulates the genomic RNA-nucleocapsid complex in the virion. Most core are conical, with only 7% tubular. The core is constituted by capsid protein hexamer subunits. The core is disassembled soon after virion entry. Host restriction factors such as TRIM5-alpha or TRIMCyp bind retroviral capsids and cause premature capsid disassembly, leading to blocks in reverse transcription. Capsid restriction by TRIM5 is one of the factors which restricts HIV-1 to the human species. Host PIN1 apparently facilitates the virion uncoating. On the other hand, interactions with PDZD8 or CYPA stabilize the capsid. In terms of biological role, encapsulates and protects viral dimeric unspliced genomic RNA (gRNA). Binds these RNAs through its zinc fingers. Acts as a nucleic acid chaperone which is involved in rearangement of nucleic acid secondary structure during gRNA retrotranscription. Also facilitates template switch leading to recombination. As part of the polyprotein, participates in gRNA dimerization, packaging, tRNA incorporation and virion assembly. Its function is as follows. Aspartyl protease that mediates proteolytic cleavages of Gag and Gag-Pol polyproteins during or shortly after the release of the virion from the plasma membrane. Cleavages take place as an ordered, step-wise cascade to yield mature proteins. This process is called maturation. Displays maximal activity during the budding process just prior to particle release from the cell. Also cleaves Nef and Vif, probably concomitantly with viral structural proteins on maturation of virus particles. Hydrolyzes host EIF4GI and PABP1 in order to shut off the capped cellular mRNA translation. The resulting inhibition of cellular protein synthesis serves to ensure maximal viral gene expression and to evade host immune response. Also mediates cleavage of host YTHDF3. Mediates cleavage of host CARD8, thereby activating the CARD8 inflammasome, leading to the clearance of latent HIV-1 in patient CD4(+) T-cells after viral reactivation; in contrast, HIV-1 can evade CARD8-sensing when its protease remains inactive in infected cells prior to viral budding. Multifunctional enzyme that converts the viral RNA genome into dsDNA in the cytoplasm, shortly after virus entry into the cell. This enzyme displays a DNA polymerase activity that can copy either DNA or RNA templates, and a ribonuclease H (RNase H) activity that cleaves the RNA strand of RNA-DNA heteroduplexes in a partially processive 3' to 5' endonucleasic mode. Conversion of viral genomic RNA into dsDNA requires many steps. A tRNA(3)-Lys binds to the primer-binding site (PBS) situated at the 5'-end of the viral RNA. RT uses the 3' end of the tRNA primer to perform a short round of RNA-dependent minus-strand DNA synthesis. The reading proceeds through the U5 region and ends after the repeated (R) region which is present at both ends of viral RNA. The portion of the RNA-DNA heteroduplex is digested by the RNase H, resulting in a ssDNA product attached to the tRNA primer. This ssDNA/tRNA hybridizes with the identical R region situated at the 3' end of viral RNA. This template exchange, known as minus-strand DNA strong stop transfer, can be either intra- or intermolecular. RT uses the 3' end of this newly synthesized short ssDNA to perform the RNA-dependent minus-strand DNA synthesis of the whole template. RNase H digests the RNA template except for two polypurine tracts (PPTs) situated at the 5'-end and near the center of the genome. It is not clear if both polymerase and RNase H activities are simultaneous. RNase H probably can proceed both in a polymerase-dependent (RNA cut into small fragments by the same RT performing DNA synthesis) and a polymerase-independent mode (cleavage of remaining RNA fragments by free RTs). Secondly, RT performs DNA-directed plus-strand DNA synthesis using the PPTs that have not been removed by RNase H as primers. PPTs and tRNA primers are then removed by RNase H. The 3' and 5' ssDNA PBS regions hybridize to form a circular dsDNA intermediate. Strand displacement synthesis by RT to the PBS and PPT ends produces a blunt ended, linear dsDNA copy of the viral genome that includes long terminal repeats (LTRs) at both ends. Functionally, catalyzes viral DNA integration into the host chromosome, by performing a series of DNA cutting and joining reactions. This enzyme activity takes place after virion entry into a cell and reverse transcription of the RNA genome in dsDNA. The first step in the integration process is 3' processing. This step requires a complex comprising the viral genome, matrix protein, Vpr and integrase. This complex is called the pre-integration complex (PIC). The integrase protein removes 2 nucleotides from each 3' end of the viral DNA, leaving recessed CA OH's at the 3' ends. In the second step, the PIC enters cell nucleus. This process is mediated through integrase and Vpr proteins, and allows the virus to infect a non dividing cell. This ability to enter the nucleus is specific of lentiviruses, other retroviruses cannot and rely on cell division to access cell chromosomes. In the third step, termed strand transfer, the integrase protein joins the previously processed 3' ends to the 5' ends of strands of target cellular DNA at the site of integration. The 5'-ends are produced by integrase-catalyzed staggered cuts, 5 bp apart. A Y-shaped, gapped, recombination intermediate results, with the 5'-ends of the viral DNA strands and the 3' ends of target DNA strands remaining unjoined, flanking a gap of 5 bp. The last step is viral DNA integration into host chromosome. This involves host DNA repair synthesis in which the 5 bp gaps between the unjoined strands are filled in and then ligated. Since this process occurs at both cuts flanking the HIV genome, a 5 bp duplication of host DNA is produced at the ends of HIV-1 integration. Alternatively, Integrase may catalyze the excision of viral DNA just after strand transfer, this is termed disintegration. This is Gag-Pol polyprotein (gag-pol) from Human immunodeficiency virus type 1 group M subtype C (isolate ETH2220) (HIV-1).